Consider the following 361-residue polypeptide: MSKLAVVAAGGTGGHMFPAQALAEALAARGWRVVLATDDRGALYADKFPAEERLALSAATAKSNDPLGMIKAGFVVLQGVMEARAAFKRLDPAVVVGFGGYPALPALLGALSQGRPTVIHEQNAVLGRVNRFLAPRVNEVACAFPILEKATPAVKACAHVVGNPVRPPVRALFDVPYLAPEVQLRVLVTGGSQGARLLSELIPEAVAKLPEEMRGRLKVFQQARAESMEQARKVYRNAMVECEVAPFFRDMAGYLRQSHLVIGRSGASTCTELAVAGRPSILIPLKIAADDHQRFNARLLEEAGGAAVCLEDELTVDVMAAALKALLSKPERLEKMAAGARSAAKPNAAEELADLVEKTAR.

UDP-N-acetyl-alpha-D-glucosamine is bound by residues 12–14, Asn-123, Arg-166, Ser-192, and Gln-293; that span reads TGG.

It belongs to the glycosyltransferase 28 family. MurG subfamily.

It is found in the cell inner membrane. It catalyses the reaction di-trans,octa-cis-undecaprenyl diphospho-N-acetyl-alpha-D-muramoyl-L-alanyl-D-glutamyl-meso-2,6-diaminopimeloyl-D-alanyl-D-alanine + UDP-N-acetyl-alpha-D-glucosamine = di-trans,octa-cis-undecaprenyl diphospho-[N-acetyl-alpha-D-glucosaminyl-(1-&gt;4)]-N-acetyl-alpha-D-muramoyl-L-alanyl-D-glutamyl-meso-2,6-diaminopimeloyl-D-alanyl-D-alanine + UDP + H(+). Its pathway is cell wall biogenesis; peptidoglycan biosynthesis. In terms of biological role, cell wall formation. Catalyzes the transfer of a GlcNAc subunit on undecaprenyl-pyrophosphoryl-MurNAc-pentapeptide (lipid intermediate I) to form undecaprenyl-pyrophosphoryl-MurNAc-(pentapeptide)GlcNAc (lipid intermediate II). The chain is UDP-N-acetylglucosamine--N-acetylmuramyl-(pentapeptide) pyrophosphoryl-undecaprenol N-acetylglucosamine transferase from Caulobacter vibrioides (strain ATCC 19089 / CIP 103742 / CB 15) (Caulobacter crescentus).